The sequence spans 193 residues: Xanthine phosphoribosyltransferase (193 aa).

Leucine 20 and threonine 27 together coordinate xanthine. 128-132 (ANGQA) serves as a coordination point for 5-phospho-alpha-D-ribose 1-diphosphate. Lysine 156 is a binding site for xanthine.

It belongs to the purine/pyrimidine phosphoribosyltransferase family. Xpt subfamily. As to quaternary structure, homodimer.

The protein resides in the cytoplasm. The enzyme catalyses XMP + diphosphate = xanthine + 5-phospho-alpha-D-ribose 1-diphosphate. It functions in the pathway purine metabolism; XMP biosynthesis via salvage pathway; XMP from xanthine: step 1/1. Its function is as follows. Converts the preformed base xanthine, a product of nucleic acid breakdown, to xanthosine 5'-monophosphate (XMP), so it can be reused for RNA or DNA synthesis. The chain is Xanthine phosphoribosyltransferase from Streptococcus pyogenes serotype M3 (strain ATCC BAA-595 / MGAS315).